The primary structure comprises 350 residues: Guanine nucleotide-binding protein G(t) subunit alpha-1 (350 aa).

The disordered stretch occupies residues 1–21; the sequence is MGAGASAEEKHSRELEKKLKE. G2 is lipidated: N-myristoyl glycine. Positions 7–21 are enriched in basic and acidic residues; it reads AEEKHSRELEKKLKE. Residues 28–350 enclose the G-alpha domain; that stretch reads RTVKLLLLGA…KENLKDCGLF (323 aa). Residues 31-44 form a G1 motif region; it reads KLLLLGAGESGKST. Position 36-43 (36-43) interacts with GTP; the sequence is GAGESGKS. S43 contributes to the Mg(2+) binding site. Y142 is modified (phosphotyrosine; by SRC). GTP-binding positions include D146, 171–177, G199, 265–268, and A322; these read LRSRVKT and NKKD. Residues 169 to 177 are G2 motif; the sequence is DVLRSRVKT. R174 is subject to ADP-ribosylarginine; by cholera toxin. Residue T177 coordinates Mg(2+). The interval 192–201 is G3 motif; that stretch reads FRMFDVGGQR. The interval 261–268 is G4 motif; it reads VLFLNKKD. The tract at residues 320–325 is G5 motif; that stretch reads TCATDT. Residues 340-350 are interaction with RHO; sequence IKENLKDCGLF. C347 bears the ADP-ribosylcysteine; by pertussis toxin mark.

It belongs to the G-alpha family. G(i/o/t/z) subfamily. In terms of assembly, heterotrimeric G proteins are composed of 3 subunits alpha, beta and gamma. The alpha chain contains the guanine nucleotide binding site. Interacts with RHO. Interacts with RGS9 and PDE6G. Interacts (when myristoylated) with UNC119; interaction is required for localization in sensory neurons. As to expression, rod photoreceptor cells. Predominantly expressed in the retina followed by the ciliary body, iris and retinal pigment epithelium.

It localises to the cell projection. Its subcellular location is the cilium. The protein localises to the photoreceptor outer segment. The protein resides in the membrane. It is found in the photoreceptor inner segment. Functionally, functions as a signal transducer for the rod photoreceptor RHO. Required for normal RHO-mediated light perception by the retina. Guanine nucleotide-binding proteins (G proteins) function as transducers downstream of G protein-coupled receptors (GPCRs), such as the photoreceptor RHO. The alpha chain contains the guanine nucleotide binding site and alternates between an active, GTP-bound state and an inactive, GDP-bound state. Activated RHO promotes GDP release and GTP binding. Signaling is mediated via downstream effector proteins, such as cGMP-phosphodiesterase. The sequence is that of Guanine nucleotide-binding protein G(t) subunit alpha-1 (GNAT1) from Homo sapiens (Human).